Reading from the N-terminus, the 157-residue chain is Transcription elongation factor GreA (157 aa).

A coiled-coil region spans residues 13–75; it reads RARLEAELEE…EIKSILARAQ (63 aa).

Belongs to the GreA/GreB family.

Its function is as follows. Necessary for efficient RNA polymerase transcription elongation past template-encoded arresting sites. The arresting sites in DNA have the property of trapping a certain fraction of elongating RNA polymerases that pass through, resulting in locked ternary complexes. Cleavage of the nascent transcript by cleavage factors such as GreA or GreB allows the resumption of elongation from the new 3'terminus. GreA releases sequences of 2 to 3 nucleotides. In Roseiflexus castenholzii (strain DSM 13941 / HLO8), this protein is Transcription elongation factor GreA.